A 224-amino-acid polypeptide reads, in one-letter code: Voltage-dependent calcium channel gamma-1 subunit (224 aa).

Residues 1–10 (MSQTKALKVR) lie on the Cytoplasmic side of the membrane. A helical transmembrane segment spans residues 11 to 29 (VTLFCILVGIVLALVAVVT). Residues 30 to 110 (DHWAVLSPHV…TQKEYSISAA (81 aa)) lie on the Extracellular side of the membrane. 2 N-linked (GlcNAc...) asparagine glycosylation sites follow: Asn43 and Asn81. A disulfide bond links Cys57 and Cys82. A helical transmembrane segment spans residues 111–131 (AIAIFSLGFIILGTICGLLSF). Residues 132 to 136 (RKKRD) lie on the Cytoplasmic side of the membrane. A helical membrane pass occupies residues 137 to 157 (YLLRPASMFYAFAGLCIFVSV). Over 158–181 (EVMRQSVKRMIDSEDTVWIDYYYG) the chain is Extracellular. Residues 182–206 (WSFACACAAFILLFLGGIALLLFSL) form a helical membrane-spanning segment. At 207-224 (PRMPQYPWESCMDAEPEH) the chain is on the cytoplasmic side.

This sequence belongs to the PMP-22/EMP/MP20 family. CACNG subfamily. As to quaternary structure, component of a calcium channel complex consisting of a pore-forming alpha subunit (CACNA1S) and the ancillary subunits CACNB1 or CACNB2, CACNG1 and CACNA2D1. The channel complex contains alpha, beta, gamma and delta subunits in a 1:1:1:1 ratio, i.e. it contains either CACNB1 or CACNB2. N-glycosylated.

The protein localises to the cell membrane. It localises to the sarcolemma. Regulatory subunit of the voltage-gated calcium channel that gives rise to L-type calcium currents in skeletal muscle. Regulates channel inactivation kinetics. The chain is Voltage-dependent calcium channel gamma-1 subunit (CACNG1) from Sus scrofa (Pig).